Reading from the N-terminus, the 292-residue chain is Poly(U)-specific endoribonuclease-A (292 aa).

One can recognise an EndoU domain in the interval 8–285 (LNHELSKLFN…IGTAYPVLLS (278 aa)). Residues H162, H178, and K224 contribute to the active site.

The protein belongs to the ENDOU family. As to quaternary structure, monomer. The cofactor is Mn(2+).

It localises to the nucleus. The catalysed reaction is uridylyl-uridylyl-ribonucleotide-RNA = a 3'-end uridylyl-2',3'-cyclophospho-uridine-RNA + a 5'-end dephospho-ribonucleoside-RNA. In terms of biological role, poly(U)-specific endoribonuclease involved in the processing of intron-encoded box C/D snoRNAs, such as U16 and U86. Releases products that have 2',3'-cyclic phosphate termini at the 3'-end. This chain is Poly(U)-specific endoribonuclease-A (endou-a), found in Xenopus laevis (African clawed frog).